We begin with the raw amino-acid sequence, 369 residues long: Cytochrome b561 and DOMON domain-containing protein At3g07570 (369 aa).

The N-terminal stretch at 1–22 (MKLYSVSIIIFVLIALSTIVNA) is a signal peptide. The DOMON domain maps to 55-167 (QNFILRYART…PRQSLLYAVG (113 aa)). The Cytochrome b561 domain occupies 174 to 369 (SSPDFRLREH…GLEVRKFLKK (196 aa)). A helical membrane pass occupies residues 212–232 (THGLMNMFGWGILIIVGAIVA). Residues His213 and His246 each contribute to the heme b site. 2 helical membrane passes run 247–267 (IALQ…GLVL) and 279–299 (HKGL…ALLA). His279 and His315 together coordinate heme b. 2 helical membrane passes run 321–341 (LLII…KAGT) and 343–363 (WNGG…GLEV).

Requires heme b as cofactor.

The protein localises to the membrane. Its function is as follows. May act as a catecholamine-responsive trans-membrane electron transporter. The polypeptide is Cytochrome b561 and DOMON domain-containing protein At3g07570 (Arabidopsis thaliana (Mouse-ear cress)).